We begin with the raw amino-acid sequence, 173 residues long: NADH-ubiquinone oxidoreductase chain 6 (173 aa).

5 consecutive transmembrane segments (helical) span residues 1–21 (MTYF…AVAS), 27–47 (YGVV…LSLG), 48–68 (VSFV…VVFV), 87–107 (VVGY…VGGF), and 139–159 (CGVG…FVVL).

This sequence belongs to the complex I subunit 6 family.

The protein resides in the mitochondrion membrane. The enzyme catalyses a ubiquinone + NADH + 5 H(+)(in) = a ubiquinol + NAD(+) + 4 H(+)(out). Its function is as follows. Core subunit of the mitochondrial membrane respiratory chain NADH dehydrogenase (Complex I) that is believed to belong to the minimal assembly required for catalysis. Complex I functions in the transfer of electrons from NADH to the respiratory chain. The immediate electron acceptor for the enzyme is believed to be ubiquinone. In Ptychoramphus aleuticus (Cassin's auklet), this protein is NADH-ubiquinone oxidoreductase chain 6 (MT-ND6).